The chain runs to 531 residues: MSKAPLFEKISVKGTLFPIEVSMKRLHLSHPYTCNGQEFSSLPMYDTSGLHGDCRTQVDPHVGLPPLRSSWNFPRTVQLGVAQTQMHYARKGVITPEMEYVAIRENQQLEEWIRSFNRHGKKVEPITPEFVRQEIAAGRAIIPANLKHPELEPMIIGRHFRVKINSNIGNSAMGSSIEEEVEKAVWSCRWGADTVMDLSTGANIHQTREWILRNSPVPIGTVPVYQALEKAGGKAENLTWELYRDTLIEQAEQGVDYFTIHAGILQEHLPYAERRLTGIVSRGGSIMATWCRHHQQENFLYTHFNDICEILKSYDIAVSLGDALRPGSILDANDEAQFGELKVLGELTKQAWQHEVQVMIEGPGHVPLNLIEENMQKELELCYEAPFYTLGPLITDIAAGYDHINSAIGGALLASLGCSMLCYVTPKEHLGLPDRNDVREGVIAHKVAAHGADIARGNPTAWLRDTLMSQARYSFAWEDQFNLSLDPEKTRAVHSQSIAASGYSAPNPDFCTMCGPDFCSMKRTQKMGKGN.

Residues asparagine 167, methionine 196, tyrosine 225, histidine 261, 281-283, 322-325, and glutamate 361 contribute to the substrate site; these read SRG and DALR. Position 365 (histidine 365) interacts with Zn(2+). Tyrosine 388 is a substrate binding site. Residue histidine 429 coordinates Zn(2+). [4Fe-4S] cluster contacts are provided by cysteine 511, cysteine 514, and cysteine 519.

The protein belongs to the ThiC family. [4Fe-4S] cluster serves as cofactor.

It catalyses the reaction 5-amino-1-(5-phospho-beta-D-ribosyl)imidazole + S-adenosyl-L-methionine = 4-amino-2-methyl-5-(phosphooxymethyl)pyrimidine + CO + 5'-deoxyadenosine + formate + L-methionine + 3 H(+). Its pathway is cofactor biosynthesis; thiamine diphosphate biosynthesis. In terms of biological role, catalyzes the synthesis of the hydroxymethylpyrimidine phosphate (HMP-P) moiety of thiamine from aminoimidazole ribotide (AIR) in a radical S-adenosyl-L-methionine (SAM)-dependent reaction. The polypeptide is Phosphomethylpyrimidine synthase (Chlorobium chlorochromatii (strain CaD3)).